The chain runs to 112 residues: Large ribosomal subunit protein uL24 (112 aa).

Residues 92–112 (ERDGKQKTVRVRVSKSTGKDL) are disordered.

Belongs to the universal ribosomal protein uL24 family. In terms of assembly, part of the 50S ribosomal subunit.

One of two assembly initiator proteins, it binds directly to the 5'-end of the 23S rRNA, where it nucleates assembly of the 50S subunit. Functionally, one of the proteins that surrounds the polypeptide exit tunnel on the outside of the subunit. The protein is Large ribosomal subunit protein uL24 of Kocuria rhizophila (strain ATCC 9341 / DSM 348 / NBRC 103217 / DC2201).